The primary structure comprises 402 residues: mRNA-capping enzyme subunit alpha (402 aa).

Residue K67 is the N6-GMP-lysine intermediate of the active site. Positions S374–I402 are disordered.

Belongs to the eukaryotic GTase family. As to quaternary structure, heterodimer. The mRNA-capping enzyme is composed of two separate chains alpha and beta, respectively a mRNA guanylyltransferase and an mRNA 5'-triphosphate monophosphatase.

The protein localises to the nucleus. It catalyses the reaction a 5'-end diphospho-ribonucleoside in mRNA + GTP + H(+) = a 5'-end (5'-triphosphoguanosine)-ribonucleoside in mRNA + diphosphate. In terms of biological role, second step of mRNA capping. Transfer of the GMP moiety of GTP to the 5'-end of RNA via an enzyme-GMP covalent reaction intermediate. The sequence is that of mRNA-capping enzyme subunit alpha (ceg1) from Schizosaccharomyces pombe (strain 972 / ATCC 24843) (Fission yeast).